A 422-amino-acid chain; its full sequence is Keratin, type I cytoskeletal 23 (422 aa).

Over residues 1-24 (MNSSHSFNQTYSASVHSLGSTRGR) the composition is skewed to polar residues. The disordered stretch occupies residues 1 to 35 (MNSSHSFNQTYSASVHSLGSTRGRQGSCHRAPSVH). Positions 1 to 71 (MNSSHSFNQT…GRSSPLLGGN (71 aa)) are head. Residues 72–107 (GKATMQNLNDRLATYLEKVRALEEANSKLETRILRW) are coil 1A. The 311-residue stretch at 72–382 (GKATMQNLND…RLLEGDTEGT (311 aa)) folds into the IF rod domain. Residues 108 to 125 (HQEREPSHRKDYSQYEEN) are linker 1. The coil 1B stretch occupies residues 126-217 (ISRLQEQIVD…KRHEQEMEEN (92 aa)). A linker 12 region spans residues 218 to 240 (HLPSDFKVSVKVDTTPGEDLIKV). The tract at residues 241–378 (LEDMRQEYEL…ATYRRLLEGD (138 aa)) is coil 2. Residues 379–422 (TEGTMDGSESRLKGSEASTIKAITQESVNGRIVLSQVNEIQKHI) form a rod-like helical tail region.

This sequence belongs to the intermediate filament family. In terms of assembly, heterotetramer of two type I and two type II keratins.

The polypeptide is Keratin, type I cytoskeletal 23 (Krt23) (Mus musculus (Mouse)).